Consider the following 322-residue polypeptide: Homeobox protein DBX1-B (322 aa).

Positions 179–238 (GMLRRAVFSDVQRKALEKMFQKQKYISKPDRKKLATKLGLKDSQVKIWFQNRRMKWRNSK) form a DNA-binding region, homeobox. Disordered regions lie at residues 238-266 (KERE…LSDV) and 296-322 (DLHF…ITVS). The segment covering 312–322 (SESEDEEITVS) has biased composition (acidic residues).

This sequence belongs to the H2.0 homeobox family.

Its subcellular location is the nucleus. This Danio rerio (Zebrafish) protein is Homeobox protein DBX1-B (dbx1b).